A 128-amino-acid chain; its full sequence is S-adenosylmethionine decarboxylase proenzyme (128 aa).

Catalysis depends on Ser-61, which acts as the Schiff-base intermediate with substrate; via pyruvic acid. A Pyruvic acid (Ser); by autocatalysis modification is found at Ser-61. His-66 serves as the catalytic Proton acceptor; for processing activity. Cys-81 functions as the Proton donor; for catalytic activity in the catalytic mechanism.

It belongs to the prokaryotic AdoMetDC family. Type 1 subfamily. As to quaternary structure, heterotetramer of two alpha and two beta chains arranged as a dimer of alpha/beta heterodimers. It depends on pyruvate as a cofactor. In terms of processing, is synthesized initially as an inactive proenzyme. Formation of the active enzyme involves a self-maturation process in which the active site pyruvoyl group is generated from an internal serine residue via an autocatalytic post-translational modification. Two non-identical subunits are generated from the proenzyme in this reaction, and the pyruvate is formed at the N-terminus of the alpha chain, which is derived from the carboxyl end of the proenzyme. The post-translation cleavage follows an unusual pathway, termed non-hydrolytic serinolysis, in which the side chain hydroxyl group of the serine supplies its oxygen atom to form the C-terminus of the beta chain, while the remainder of the serine residue undergoes an oxidative deamination to produce ammonia and the pyruvoyl group blocking the N-terminus of the alpha chain.

It catalyses the reaction S-adenosyl-L-methionine + H(+) = S-adenosyl 3-(methylsulfanyl)propylamine + CO2. It functions in the pathway amine and polyamine biosynthesis; S-adenosylmethioninamine biosynthesis; S-adenosylmethioninamine from S-adenosyl-L-methionine: step 1/1. Functionally, catalyzes the decarboxylation of S-adenosylmethionine to S-adenosylmethioninamine (dcAdoMet), the propylamine donor required for the synthesis of the polyamines spermine and spermidine from the diamine putrescine. This is S-adenosylmethionine decarboxylase proenzyme from Synechococcus sp. (strain WH7803).